The primary structure comprises 190 residues: Peptidyl-tRNA hydrolase (190 aa).

Y14 provides a ligand contact to tRNA. Catalysis depends on H19, which acts as the Proton acceptor. Positions 64, 66, and 112 each coordinate tRNA.

This sequence belongs to the PTH family. In terms of assembly, monomer.

The protein resides in the cytoplasm. It catalyses the reaction an N-acyl-L-alpha-aminoacyl-tRNA + H2O = an N-acyl-L-amino acid + a tRNA + H(+). Its function is as follows. Hydrolyzes ribosome-free peptidyl-tRNAs (with 1 or more amino acids incorporated), which drop off the ribosome during protein synthesis, or as a result of ribosome stalling. Functionally, catalyzes the release of premature peptidyl moieties from peptidyl-tRNA molecules trapped in stalled 50S ribosomal subunits, and thus maintains levels of free tRNAs and 50S ribosomes. This chain is Peptidyl-tRNA hydrolase, found in Chlorobium phaeovibrioides (strain DSM 265 / 1930) (Prosthecochloris vibrioformis (strain DSM 265)).